We begin with the raw amino-acid sequence, 1605 residues long: GTPase-activating protein pac-1 (1605 aa).

A required for localization to adherens junctions region spans residues 1–574 (MEEHHRRLHV…QRFIALFNSS (574 aa)). 3 disordered regions span residues 293 to 430 (QRHP…ISTS), 529 to 556 (MRSG…LNAP), and 574 to 593 (SKTS…RSRT). Residues 323–334 (SKEDPSEDTGHD) show a composition bias toward basic and acidic residues. Composition is skewed to low complexity over residues 353–365 (RNAS…SSRS), 420–430 (TTSSTSSISTS), and 530–552 (RSGG…TSRS). In terms of domain architecture, PH spans 599–726 (RFALPGTILQ…WISVLQSSSE (128 aa)). Composition is skewed to polar residues over residues 728–745 (GIAT…TTGR) and 846–855 (KNSQLQSPTA). Disordered stretches follow at residues 728–752 (GIAT…NAVS) and 846–942 (KNSQ…AGAP). The span at 868–879 (SSSQTMATTSSS) shows a compositional bias: low complexity. Over residues 908 to 917 (SGRKWKKSKA) the composition is skewed to basic residues. A compositionally biased stretch (low complexity) spans 928–941 (GSSSGSQQQGAAGA). One can recognise a Rho-GAP domain in the interval 948-1146 (VRIADCPTGS…TLIHYNLWMF (199 aa)). Disordered stretches follow at residues 1152-1176 (TEDA…YGVG), 1207-1258 (EGKG…AASV), 1277-1339 (SRQT…RRKR), 1438-1533 (TSDY…ARRH), and 1554-1605 (GIRK…DELL). The span at 1211–1229 (QKIKNMLRRNSRRDKSKSK) shows a compositional bias: basic residues. 2 stretches are compositionally biased toward polar residues: residues 1244–1257 (GWTQ…SAAS) and 1278–1300 (RQTV…RLDQ). The span at 1301–1312 (SPSLESSLGSLP) shows a compositional bias: low complexity. Residues 1438 to 1453 (TSDYSTTSSAPLSTNP) show a composition bias toward polar residues. Residues 1461–1476 (DQPNSSSDYASSDPSP) show a composition bias toward low complexity. 2 stretches are compositionally biased toward polar residues: residues 1480–1493 (NPST…SNLA) and 1500–1515 (HATS…MSRS). The span at 1558 to 1575 (SSPDVSRDEVSDDEKNHQ) shows a compositional bias: basic and acidic residues.

In terms of assembly, associated with the catenin-cadherin complex consisting of hmr-1, hmp-1 and hmp-2; this is mediated by interaction with picc-1.

It is found in the cytoplasm. Its subcellular location is the cell junction. It localises to the adherens junction. In terms of biological role, GTPase-activating protein for members of the Rho subfamily including Rac1, RhoA and cdc42 and other Ras-related subfamilies including let-60. Mediates radial (inner-outer) polarity and gastrulation by excluding par-6 from contacted cell surfaces; acts by inactivating cdc42 at inner cell surfaces which limits active cdc42 to outer cell surfaces devoid of cell-cell contacts, where cdc42 can bind and recruit par-6. Required for blastomere polarization. The polypeptide is GTPase-activating protein pac-1 (pac-1) (Caenorhabditis elegans).